The following is an 819-amino-acid chain: Lysine-specific demethylase JMJ18 (819 aa).

The tract at residues 1–39 is disordered; that stretch reads MENPPLESEIKEDMSLKNHPPDKDKDKDTIMEQPSSPRH. Residues 8 to 30 are compositionally biased toward basic and acidic residues; sequence SEIKEDMSLKNHPPDKDKDKDTI. The JmjN domain maps to 59-100; it reads APVFTPSLEEFVDPLAYIEKIRPLAEPYGICRIIPPSTWKPP. A disordered region spans residues 120–171; sequence TVDLLQNREPMKKKPKSRKRKRRRNSRMGSSKRRSGSSPAESTSSPEAEEKF. Residues 130-137 carry the Nuclear localization signal motif; sequence MKKKPKSR. The span at 130-154 shows a compositional bias: basic residues; that stretch reads MKKKPKSRKRKRRRNSRMGSSKRRS. Over residues 155 to 165 the composition is skewed to low complexity; that stretch reads GSSPAESTSSP. Residues 261 to 427 enclose the JmjC domain; it reads QYTLSGWNLN…HGQNAVELYS (167 aa). Fe cation contacts are provided by His-307, Glu-309, and His-395. Zn(2+)-binding residues include Cys-519, Cys-522, Cys-533, Cys-535, Cys-542, His-545, Cys-550, and Cys-552. The C5HC2 zinc finger occupies 519-571; it reads CFSCFYDLHLSASGCKCSPEEYACLKHADDLCSCDVKDGFILLRYTMDELSSL. The region spanning 644–702 is the FYR N-terminal domain; it reads ASENLGVSVEPINLGFLIFGKLWCNKYAIFPKGFRSRVKFYNVLDPTRMSNYISEVLDA. Positions 704 to 788 constitute an FYR C-terminal domain; it reads LMGPLFRVTL…HRLVEYWNHK (85 aa).

The protein belongs to the JARID1 histone demethylase family. It depends on Fe(2+) as a cofactor. As to expression, expressed in vascular tissues of roots, cotyledons, leaves and flowers. Expressed predominantly in phloem companion cells of roots. Present in inflorescences, roots, siliques, leaves and stems.

Its subcellular location is the nucleus. The catalysed reaction is N(6),N(6),N(6)-trimethyl-L-lysyl(4)-[histone H3] + 2-oxoglutarate + O2 = N(6),N(6)-dimethyl-L-lysyl(4)-[histone H3] + formaldehyde + succinate + CO2. It catalyses the reaction N(6),N(6)-dimethyl-L-lysyl(4)-[histone H3] + 2-oxoglutarate + O2 = N(6)-methyl-L-lysyl(4)-[histone H3] + formaldehyde + succinate + CO2. Functionally, histone demethylase that demethylates 'Lys-4' (H3K4me) of histone H3 with a specific activity for H3K4me3 and H3K4me2. No activity on H3K9me3/2, H3K27me3/2 and H3K36me3/2. Involved in the control of flowering time by demethylating H3K4me3 at the FLC locus and repressing its expression. The repression of FLC level and reduction in H3K4me3 at the FLC locus results in induction of the flowering activator FT, which is a downstream target of FLC. The polypeptide is Lysine-specific demethylase JMJ18 (Arabidopsis thaliana (Mouse-ear cress)).